Here is a 158-residue protein sequence, read N- to C-terminus: MENSENVPSYDQNINFTPNLTRDQEHVIMVSALQQVISNVGGDTNSNAWEADLPPLNAGPCPLCSVTGCYGCVFPRHEAIIKKEKKHKGVRKKPSGKWAAEIWDPSLKVRRWLGTFPTAEMAAKAYNDAAAEFVGRRSARRGTKNGEEASTKKTTEKN.

Residues 86 to 147 constitute a DNA-binding region (AP2/ERF); it reads KHKGVRKKPS…SARRGTKNGE (62 aa). A disordered region spans residues 134–158; that stretch reads VGRRSARRGTKNGEEASTKKTTEKN. Residues 144–158 are compositionally biased toward basic and acidic residues; that stretch reads KNGEEASTKKTTEKN.

It belongs to the AP2/ERF transcription factor family. ERF subfamily.

The protein resides in the nucleus. In terms of biological role, probably acts as a transcriptional activator. Binds to the GCC-box pathogenesis-related promoter element. May be involved in the regulation of gene expression by stress factors and by components of stress signal transduction pathways. This Arabidopsis thaliana (Mouse-ear cress) protein is Ethylene-responsive transcription factor ERF120 (ERF120).